The sequence spans 215 residues: MNCEVCQLKELEVESFEIREVLRCILHTIVFHRALGLIRPKDIDLELFEITYVQCGEIEVEKKIDEKIEQFINWIEKHPNKKSQICLSFYEVKSKQPSWFTKIERLYWEQWYINLNVLQPTKPPVGKSHHSKLVMDPGEASEERSSRRTLLEQSLQEVLFQIIKFVNEKKDHVPPINDGVIYYPFEITIPSSSDSAFGMDMFKRILHSGHPSMLG.

Residues P124–R147 are disordered.

This sequence belongs to the ATG101 family. As to quaternary structure, interacts with ATG11 and ATG13A.

It localises to the cytoplasmic vesicle. It is found in the autophagosome. Functionally, accessory protein involved in autophagy. Acts as a scaffold protein of the ATG1-ATG13 complex for faithful delivery of autophagic vesicles to the vacuole. Required for selective mitophagy. This Arabidopsis thaliana (Mouse-ear cress) protein is Autophagy-related protein 101.